The sequence spans 572 residues: Proline--tRNA ligase (572 aa).

This sequence belongs to the class-II aminoacyl-tRNA synthetase family. ProS type 1 subfamily. In terms of assembly, homodimer.

It is found in the cytoplasm. It carries out the reaction tRNA(Pro) + L-proline + ATP = L-prolyl-tRNA(Pro) + AMP + diphosphate. In terms of biological role, catalyzes the attachment of proline to tRNA(Pro) in a two-step reaction: proline is first activated by ATP to form Pro-AMP and then transferred to the acceptor end of tRNA(Pro). As ProRS can inadvertently accommodate and process non-cognate amino acids such as alanine and cysteine, to avoid such errors it has two additional distinct editing activities against alanine. One activity is designated as 'pretransfer' editing and involves the tRNA(Pro)-independent hydrolysis of activated Ala-AMP. The other activity is designated 'posttransfer' editing and involves deacylation of mischarged Ala-tRNA(Pro). The misacylated Cys-tRNA(Pro) is not edited by ProRS. The polypeptide is Proline--tRNA ligase (Enterococcus faecalis (strain ATCC 700802 / V583)).